Here is a 703-residue protein sequence, read N- to C-terminus: Pentatricopeptide repeat-containing protein At1g22830 (703 aa).

PPR repeat units lie at residues 82 to 116, 117 to 147, 148 to 182, 183 to 217, 218 to 248, 249 to 283, 284 to 318, 319 to 353, 356 to 386, 387 to 421, 422 to 452, 458 to 488, 489 to 523, 524 to 554, and 560 to 594; these read VLYS…GLEF, DSVL…SEIL, HPLP…GIRA, DEFT…SHRC, NLYV…MSER, DAVS…GVEA, SIVT…NVRI, GSVA…CSFS, IDNV…VEAN, SLST…GFHP, NHIT…ILRR, CLIL…MRKR, DKVT…GIKP, DHVT…MEHV, and RLEH…PSSA. Residues 595–671 are type E motif; that stretch reads MCATLLKACL…AHEFALMETD (77 aa). The disordered stretch occupies residues 671–703; it reads DSELDGENNKPMNDDSVINQEQSSDEERLVEVG.

It belongs to the PPR family. PCMP-E subfamily.

In Arabidopsis thaliana (Mouse-ear cress), this protein is Pentatricopeptide repeat-containing protein At1g22830 (PCMP-E24).